Consider the following 397-residue polypeptide: MAKAKFERTKPHCNIGTIGHVDHGKTTLTAAITKTLHERLGTGEAVAFENIDKAPEERERGITISTAHVEYETEKRHYAHVDCPGHADYVKNMITGAAQMDAGILVVAATDGVMAQTREHILLARQVGVPYIVVFMNKCDMVDDPELLELVDMEIRELLNEYGFPGDDTPIIQGSALKALEDPNSEWGDKILELMHTIDEYVPDPERDTDKPFLMPVEDVFSITGRGTVATGRVERGVLHVNEEVEIVGIHEDIRKVVVTGIEMFRKLLDEAQPGDNIGALLRGVQRDEIQRGQVLCKPGSITPHHKFTAQVYVLTKDEGGRHTPFFNNYRPQFYFRTTDVTGVCELPAGTEMCMPGDNVEMTVELIHNVAMEQGLRFAIREGGRTVGSGAVATIIE.

A tr-type G domain is found at 10–206; sequence KPHCNIGTIG…TIDEYVPDPE (197 aa). Residues 19–26 are G1; that stretch reads GHVDHGKT. 19–26 contributes to the GTP binding site; sequence GHVDHGKT. Threonine 26 lines the Mg(2+) pocket. The interval 61-65 is G2; it reads GITIS. A G3 region spans residues 82 to 85; sequence DCPG. Residues 82 to 86 and 137 to 140 contribute to the GTP site; these read DCPGH and NKCD. The segment at 137–140 is G4; sequence NKCD. Positions 175-177 are G5; it reads SAL.

This sequence belongs to the TRAFAC class translation factor GTPase superfamily. Classic translation factor GTPase family. EF-Tu/EF-1A subfamily. In terms of assembly, monomer.

The protein resides in the cytoplasm. It carries out the reaction GTP + H2O = GDP + phosphate + H(+). Functionally, GTP hydrolase that promotes the GTP-dependent binding of aminoacyl-tRNA to the A-site of ribosomes during protein biosynthesis. The polypeptide is Elongation factor Tu (Lachnospira eligens (strain ATCC 27750 / DSM 3376 / VPI C15-48 / C15-B4) (Eubacterium eligens)).